Reading from the N-terminus, the 427-residue chain is Gamma-glutamyl phosphate reductase (427 aa).

It belongs to the gamma-glutamyl phosphate reductase family.

The protein resides in the cytoplasm. It catalyses the reaction L-glutamate 5-semialdehyde + phosphate + NADP(+) = L-glutamyl 5-phosphate + NADPH + H(+). It participates in amino-acid biosynthesis; L-proline biosynthesis; L-glutamate 5-semialdehyde from L-glutamate: step 2/2. In terms of biological role, catalyzes the NADPH-dependent reduction of L-glutamate 5-phosphate into L-glutamate 5-semialdehyde and phosphate. The product spontaneously undergoes cyclization to form 1-pyrroline-5-carboxylate. The chain is Gamma-glutamyl phosphate reductase from Streptomyces griseus subsp. griseus (strain JCM 4626 / CBS 651.72 / NBRC 13350 / KCC S-0626 / ISP 5235).